Reading from the N-terminus, the 373-residue chain is 3 beta-hydroxysteroid dehydrogenase/Delta 5--&gt;4-isomerase type 2 (373 aa).

The active-site Proton acceptor is Tyr155. An NAD(+)-binding site is contributed by Lys159. A helical transmembrane segment spans residues 288–308 (LPLLYWLAFLLETVSFLLRPF).

Belongs to the 3-beta-HSD family. As to expression, adrenal glands, testes and ovaries.

The protein resides in the endoplasmic reticulum membrane. Its subcellular location is the mitochondrion membrane. It carries out the reaction a 3beta-hydroxy-Delta(5)-steroid + NAD(+) = a 3-oxo-Delta(5)-steroid + NADH + H(+). The enzyme catalyses a 3-oxo-Delta(5)-steroid = a 3-oxo-Delta(4)-steroid. It functions in the pathway lipid metabolism; steroid biosynthesis. In terms of biological role, 3-beta-HSD is a bifunctional enzyme, that catalyzes the oxidative conversion of Delta(5)-ene-3-beta-hydroxy steroid, and the oxidative conversion of ketosteroids. The 3-beta-HSD enzymatic system plays a crucial role in the biosynthesis of all classes of hormonal steroids. This chain is 3 beta-hydroxysteroid dehydrogenase/Delta 5--&gt;4-isomerase type 2 (Hsd3b), found in Rattus norvegicus (Rat).